We begin with the raw amino-acid sequence, 463 residues long: UDP-N-acetylmuramoylalanine--D-glutamate ligase (463 aa).

109–115 lines the ATP pocket; that stretch reads GTDGKST.

Belongs to the MurCDEF family.

The protein resides in the cytoplasm. The catalysed reaction is UDP-N-acetyl-alpha-D-muramoyl-L-alanine + D-glutamate + ATP = UDP-N-acetyl-alpha-D-muramoyl-L-alanyl-D-glutamate + ADP + phosphate + H(+). It participates in cell wall biogenesis; peptidoglycan biosynthesis. Functionally, cell wall formation. Catalyzes the addition of glutamate to the nucleotide precursor UDP-N-acetylmuramoyl-L-alanine (UMA). This Leptospira interrogans serogroup Icterohaemorrhagiae serovar copenhageni (strain Fiocruz L1-130) protein is UDP-N-acetylmuramoylalanine--D-glutamate ligase.